The following is a 348-amino-acid chain: Competence protein ComGA (348 aa).

145 to 152 (GATGSGKT) provides a ligand contact to ATP.

It belongs to the GSP E family.

It localises to the cell membrane. Its function is as follows. Required for uptake of DNA by competent cells. This chain is Competence protein ComGA (comGA), found in Halalkalibacterium halodurans (strain ATCC BAA-125 / DSM 18197 / FERM 7344 / JCM 9153 / C-125) (Bacillus halodurans).